Reading from the N-terminus, the 747-residue chain is Sulfhydryl oxidase 1 (747 aa).

The first 29 residues, 1-29 (MRRCNSGSGPPPSLLLLLLWLLAVPGANA), serve as a signal peptide directing secretion. One can recognise a Thioredoxin domain in the interval 36-156 (YSPSDPLTLL…RERLIDALES (121 aa)). Catalysis depends on nucleophile residues cysteine 70 and cysteine 73. Intrachain disulfides connect cysteine 70-cysteine 73 and cysteine 101-cysteine 110. The N-linked (GlcNAc...) (complex) asparagine glycan is linked to asparagine 130. N-linked (GlcNAc...) asparagine glycosylation occurs at asparagine 243. Cysteine 393 and cysteine 405 are joined by a disulfide. An ERV/ALR sulfhydryl oxidase domain is found at 396–503 (SEPHFRGFPC…EDPQFPKVQW (108 aa)). Residues arginine 401, tryptophan 408, and histidine 412 each coordinate FAD. Phosphoserine; by FAM20C is present on serine 426. Cysteine 449 and cysteine 452 are oxidised to a cystine. FAD-binding positions include aspartate 451, histidine 455, 478–485 (WSSHNRVN), lysine 500, and tryptophan 503. An intrachain disulfide couples cysteine 509 to cysteine 512. Positions 573–633 (SRNSTLDPGK…HMAELQRNEQ (61 aa)) are disordered. The N-linked (GlcNAc...) asparagine glycan is linked to asparagine 575. Over residues 621–633 (PPEHMAELQRNEQ) the composition is skewed to basic and acidic residues. Residues 710–730 (ISLCVGLYSLSFMGLLAMYTY) form a helical membrane-spanning segment.

It belongs to the quiescin-sulfhydryl oxidase (QSOX) family. Monomer. FAD serves as cofactor. N-glycosylated. O-glycosylated on Thr and Ser residues. Expressed in heart, placenta, lung, liver, skeletal muscle, pancreas and very weakly in brain and kidney.

The protein localises to the golgi apparatus membrane. The protein resides in the secreted. It catalyses the reaction 2 R'C(R)SH + O2 = R'C(R)S-S(R)CR' + H2O2. Functionally, catalyzes the oxidation of sulfhydryl groups in peptide and protein thiols to disulfides with the reduction of oxygen to hydrogen peroxide. Plays a role in disulfide bond formation in a variety of extracellular proteins. In fibroblasts, required for normal incorporation of laminin into the extracellular matrix, and thereby for normal cell-cell adhesion and cell migration. This chain is Sulfhydryl oxidase 1 (QSOX1), found in Homo sapiens (Human).